The chain runs to 439 residues: L-tryptophan decarboxylase (439 aa).

It belongs to the phosphatidylserine decarboxylase family.

The enzyme catalyses L-tryptophan + H(+) = tryptamine + CO2. It functions in the pathway secondary metabolite biosynthesis. Functionally, L-tryptophan decarboxylase; part of the gene cluster that mediates the biosynthesis of psilocybin, a psychotropic tryptamine-derived natural product. The first step in the pathway is the decarboxylation of L-tryptophan to tryptamine by the decarboxylase psiD. PsiD does not decarboxylate phenylalanine, tyrosine, or 5-hydroxy- L -tryptophan (5-HTP). 4-hydroxy-L-tryptophan is accepted as substrate by psiD as well. The cytochrome P450 monooxygenase psiH then converts tryptamine to 4-hydroxytryptamine. The kinase psiK catalyzes the 4-O-phosphorylation step by converting 4-hydroxytryptamine into norbaeocystin. The methyltransferase psiM then catalyzes iterative methyl transfer to the amino group of norbaeocystin to yield psilocybin via a monomethylated intermediate, baeocystin. 4-hydroxy-6-methyl-l-tryptophancan also be converted the decarboxylase PsiD, kinase PsiK, and methyltransferase PsiM into respectively 6-methyl-norbaeocystin, 6-methylbaeocystin, and 6-methylpsilocybin. The chain is L-tryptophan decarboxylase from Psilocybe cyanescens.